The following is a 325-amino-acid chain: Elongation factor P--(R)-beta-lysine ligase (325 aa).

76-78 (SPE) lines the substrate pocket. ATP-binding positions include 100 to 102 (RNE) and Asn109. Tyr118 lines the substrate pocket. ATP is bound at residue 244–245 (EL). Glu251 contacts substrate. Gly300 lines the ATP pocket.

It belongs to the class-II aminoacyl-tRNA synthetase family. EpmA subfamily. As to quaternary structure, homodimer.

It carries out the reaction D-beta-lysine + L-lysyl-[protein] + ATP = N(6)-((3R)-3,6-diaminohexanoyl)-L-lysyl-[protein] + AMP + diphosphate + H(+). In terms of biological role, with EpmB is involved in the beta-lysylation step of the post-translational modification of translation elongation factor P (EF-P) on 'Lys-34'. Catalyzes the ATP-dependent activation of (R)-beta-lysine produced by EpmB, forming a lysyl-adenylate, from which the beta-lysyl moiety is then transferred to the epsilon-amino group of EF-P 'Lys-34'. In Salmonella dublin (strain CT_02021853), this protein is Elongation factor P--(R)-beta-lysine ligase.